The chain runs to 470 residues: Sorting nexin-17 (470 aa).

A PX domain is found at Met1–Thr109. A 1,2-diacyl-sn-glycero-3-phospho-(1D-myo-inositol-3-phosphate) contacts are provided by Arg36, Ser38, Lys62, and Arg75. One can recognise a Ras-associating domain in the interval Glu115 to Trp206. Residues Glu115 to Leu432 are FERM-like. The interval Gly270–Leu432 is PTB-like F3 module. The disordered stretch occupies residues Gly401–Ser425. Residues Ser407, Ser409, Ser415, Ser421, Ser437, and Ser440 each carry the phosphoserine modification.

It belongs to the sorting nexin family. In terms of assembly, monomer. Interacts with APP (via cytoplasmic YXNPXY motif). Interacts with KIF1B. Interacts with the C-termini of P-selectin, PTC, LDLR, VLDLR, LRP1 and LRP8. Interacts with KRIT1 (via N-terminus). Interacts with HRAS. Interacts with ITGB1 and ITGB5 (via NPxY motif). Interacts with CCDC22 and CCDC93; the interaction associates SNX17 with the CCC complex. Interacts (via C-terminus) with VPS26C and VPS35L; the interactions are direct and associate SNX17 with the retriever complex.

The protein localises to the cytoplasm. The protein resides in the early endosome. It localises to the cytoplasmic vesicle membrane. Its function is as follows. Critical regulator of endosomal recycling of numerous surface proteins, including integrins, signaling receptor and channels. Binds to NPxY sequences in the cytoplasmic tails of target cargos. Associates with retriever and CCC complexes to prevent lysosomal degradation and promote cell surface recycling of numerous cargos such as integrins ITGB1, ITGB5 and their associated alpha subunits. Also required for maintenance of normal cell surface levels of APP and LRP1. Interacts with membranes containing phosphatidylinositol 3-phosphate (PtdIns(3P)). The protein is Sorting nexin-17 (Snx17) of Rattus norvegicus (Rat).